The chain runs to 430 residues: Phosphomethylpyrimidine synthase (430 aa).

Substrate-binding positions include asparagine 67, methionine 96, tyrosine 125, histidine 161, 183–185, 224–227, and glutamate 263; these read SRG and DALR. Histidine 267 is a binding site for Zn(2+). Position 290 (tyrosine 290) interacts with substrate. Histidine 331 is a binding site for Zn(2+). Cysteine 406, cysteine 409, and cysteine 413 together coordinate [4Fe-4S] cluster.

It belongs to the ThiC family. In terms of assembly, homodimer. Requires [4Fe-4S] cluster as cofactor.

The catalysed reaction is 5-amino-1-(5-phospho-beta-D-ribosyl)imidazole + S-adenosyl-L-methionine = 4-amino-2-methyl-5-(phosphooxymethyl)pyrimidine + CO + 5'-deoxyadenosine + formate + L-methionine + 3 H(+). Its pathway is cofactor biosynthesis; thiamine diphosphate biosynthesis. Catalyzes the synthesis of the hydroxymethylpyrimidine phosphate (HMP-P) moiety of thiamine from aminoimidazole ribotide (AIR) in a radical S-adenosyl-L-methionine (SAM)-dependent reaction. In Campylobacter jejuni subsp. jejuni serotype O:6 (strain 81116 / NCTC 11828), this protein is Phosphomethylpyrimidine synthase.